Here is a 195-residue protein sequence, read N- to C-terminus: Glutathione S-transferase class-mu 26 kDa isozyme (195 aa).

One can recognise a GST N-terminal domain in the interval 1–83 (MAPKLGYWKI…YIADKHNMLG (83 aa)). Residues 7–8 (YW), 41–45 (WRNEK), 54–55 (NL), and 67–68 (QS) contribute to the glutathione site. The GST C-terminal domain maps to 85 to 195 (CPKERAEISM…TFGGGDAPPK (111 aa)). Tyr111 contacts substrate.

Belongs to the GST superfamily. Mu family. Homodimer.

It carries out the reaction RX + glutathione = an S-substituted glutathione + a halide anion + H(+). Conjugation of reduced glutathione to a wide number of exogenous and endogenous hydrophobic electrophiles. In terms of biological role, GST isoenzymes appear to play a central role in the parasite detoxification system. Other functions are also suspected including a role in increasing the solubility of haematin in the parasite gut. The protein is Glutathione S-transferase class-mu 26 kDa isozyme of Schistosoma mansoni (Blood fluke).